The primary structure comprises 188 residues: dCTP deaminase, dUMP-forming (188 aa).

Residues 101–106 (KSSLGR), D119, 127–129 (TLE), Q148, Y162, and Q174 contribute to the dCTP site. E129 functions as the Proton donor/acceptor in the catalytic mechanism.

It belongs to the dCTP deaminase family. As to quaternary structure, homotrimer.

The catalysed reaction is dCTP + 2 H2O = dUMP + NH4(+) + diphosphate. Its pathway is pyrimidine metabolism; dUMP biosynthesis; dUMP from dCTP: step 1/1. Functionally, bifunctional enzyme that catalyzes both the deamination of dCTP to dUTP and the hydrolysis of dUTP to dUMP without releasing the toxic dUTP intermediate. The protein is dCTP deaminase, dUMP-forming of Corynebacterium jeikeium (strain K411).